A 1543-amino-acid polypeptide reads, in one-letter code: ABC multidrug transporter AFR1 (1543 aa).

Residues 1-85 (MSAAGVPAEL…DGKQKRLPAD (85 aa)) form a disordered region. Over residues 18 to 41 (TATTQNPSGLANSQVTSGPVSSAT) the composition is skewed to polar residues. Residues 62–83 (AVEAEKAEAIDAAGDGKQKRLP) are compositionally biased toward basic and acidic residues. N-linked (GlcNAc...) asparagine glycosylation is present at Asn117. The segment at 119 to 157 (SQRSQHELHRPTTRHSVRSSFSRKDRVVSRLTQDDAEKA) is disordered. Residues 140–157 (SRKDRVVSRLTQDDAEKA) show a composition bias toward basic and acidic residues. N-linked (GlcNAc...) asparagine glycans are attached at residues Asn208 and Asn398. Positions 222–474 (IKVLGIFGFN…MIGLGYRDLP (253 aa)) constitute an ABC transporter 1 domain. 5 helical membrane-spanning segments follow: residues 585–605 (FGISTGFATSIIIALIVGSVY), 619–639 (GGLLFLGLLFNALTSFSELPS), 670–690 (VPYNASVIFLFSIVLYFMGGL), 695–715 (GAFFMFFLFVFLTFMVMSAFF), and 727–747 (VAARLASVLISFMVTYTGYMI). An N-linked (GlcNAc...) asparagine glycan is attached at Asn823. Residues 845 to 865 (FGILLGFFTFFMFLQMLFIEV) traverse the membrane as a helical segment. The ABC transporter 2 domain occupies 918 to 1160 (FTWEGLSYTV…VLIDYLERNG (243 aa)). 954-961 (GASGAGKT) contributes to the ATP binding site. Asn1223 carries N-linked (GlcNAc...) asparagine glycosylation. 6 consecutive transmembrane segments (helical) span residues 1254–1274 (WTRLFAHLAIGLIVTLTFLQL), 1285–1305 (VFAIFFATVLPALILAQIEPQ), 1336–1356 (MPYSLGCAVSFFLLLYYGVGF), 1366–1386 (FFLMILVTEVYAVTLGQAVAA), 1391–1411 (ILIAALFNPFLLVLFSIFCGV), and 1517–1537 (FGIFICYVVFNILVLLIAARF).

The protein belongs to the ABC transporter superfamily. ABCG family. PDR (TC 3.A.1.205) subfamily.

It localises to the cell membrane. It carries out the reaction itraconazole(in) + ATP + H2O = itraconazole(out) + ADP + phosphate + H(+). It catalyses the reaction voriconazole(in) + ATP + H2O = voriconazole(out) + ADP + phosphate + H(+). The enzyme catalyses fluconazole(in) + ATP + H2O = fluconazole(out) + ADP + phosphate + H(+). Its function is as follows. Major pleiotropic ABC efflux transporter that confers resistance to structurally and functionally unrelated compounds including azoles such as fluconazole (FLC), itraconazole (ITC), posaconazole (POS), and voriconazole (VRC). Is also able to efflux the eukaryote protein synthesis inhibitor cycloheximide (CHX). This is ABC multidrug transporter AFR1 from Cryptococcus neoformans var. grubii serotype A (strain H99 / ATCC 208821 / CBS 10515 / FGSC 9487) (Filobasidiella neoformans var. grubii).